A 545-amino-acid polypeptide reads, in one-letter code: External NADH-ubiquinone oxidoreductase 2, mitochondrial (545 aa).

Residues 1–21 (MLPRLGFARTARSIHRFKMTQ) constitute a mitochondrion transit peptide. Residue 99–129 (ELVILGTGWGAISLLKKLDTSLYNVTVVSPR) coordinates FAD. NAD(+) is bound at residue 260–296 (LTFVVVGGGPTGVEFAAELQDYINQDLRKWMPDLSKE).

Belongs to the NADH dehydrogenase family.

It localises to the mitochondrion intermembrane space. It catalyses the reaction a quinone + NADH + H(+) = a quinol + NAD(+). The enzyme catalyses a ubiquinone + NADH + H(+) = a ubiquinol + NAD(+). In terms of biological role, external NADH dehydrogenase required for optimum cellular growth with a number of nonfermentable carbon sources, including ethanol. With NDE1, performes the mitochondrial oxidation of cytosolic NADH under these growth conditions. Regulates the mitochondrial glycerol-3-phosphate dehydrogenase, GUT2, also involved in cytosolic NADH oxidation. The polypeptide is External NADH-ubiquinone oxidoreductase 2, mitochondrial (NDE2) (Saccharomyces cerevisiae (strain ATCC 204508 / S288c) (Baker's yeast)).